The chain runs to 21 residues: Cutinase 2 (21 aa).

This sequence belongs to the cutinase family.

The protein localises to the secreted. The enzyme catalyses cutin + H2O = cutin monomers.. Inhibited by diisopropyl fluorophosphate (DFP). Functionally, catalyzes the hydrolysis of complex carboxylic polyesters found in the cell wall of plants. Degrades cutin, a macromolecule that forms the structure of the plant cuticle. Allows pathogenic fungi to penetrate through the cuticular barrier into the host plant during the initial stage of fungal infection. In Colletotrichum gloeosporioides (Anthracnose fungus), this protein is Cutinase 2.